A 346-amino-acid chain; its full sequence is Phosphoribosylformylglycinamidine cyclo-ligase (346 aa).

The protein belongs to the AIR synthase family.

Its subcellular location is the cytoplasm. The enzyme catalyses 2-formamido-N(1)-(5-O-phospho-beta-D-ribosyl)acetamidine + ATP = 5-amino-1-(5-phospho-beta-D-ribosyl)imidazole + ADP + phosphate + H(+). The protein operates within purine metabolism; IMP biosynthesis via de novo pathway; 5-amino-1-(5-phospho-D-ribosyl)imidazole from N(2)-formyl-N(1)-(5-phospho-D-ribosyl)glycinamide: step 2/2. The protein is Phosphoribosylformylglycinamidine cyclo-ligase of Bacillus cereus (strain ZK / E33L).